The chain runs to 152 residues: Deoxyuridine 5'-triphosphate nucleotidohydrolase (152 aa).

Substrate contacts are provided by residues 71 to 73 (RSG), Asn84, 88 to 90 (LID), and Met98.

It belongs to the dUTPase family. Mg(2+) is required as a cofactor.

The catalysed reaction is dUTP + H2O = dUMP + diphosphate + H(+). It functions in the pathway pyrimidine metabolism; dUMP biosynthesis; dUMP from dCTP (dUTP route): step 2/2. Functionally, this enzyme is involved in nucleotide metabolism: it produces dUMP, the immediate precursor of thymidine nucleotides and it decreases the intracellular concentration of dUTP so that uracil cannot be incorporated into DNA. The polypeptide is Deoxyuridine 5'-triphosphate nucleotidohydrolase (Shewanella amazonensis (strain ATCC BAA-1098 / SB2B)).